Consider the following 959-residue polypeptide: Protein NLP7 (959 aa).

The segment at 1-22 (MCEPDDNSARNGVTTQPSRSRE) is disordered. Positions 9-18 (ARNGVTTQPS) are enriched in polar residues. One can recognise an RWP-RK domain in the interval 578 to 659 (KKKTEKKRGK…IESVQGTDGG (82 aa)). The stretch at 633–654 (SRKIKKVNRSITKLKRVIESVQ) forms a coiled coil. Polar residues-rich tracts occupy residues 673–687 (THGQTSAQPLNSPNG), 694–703 (PNTNNSPNHW), and 735–745 (GTPTSHGSCDG). The tract at residues 673 to 760 (THGQTSAQPL…PKVPNQDPLF (88 aa)) is disordered. In terms of domain architecture, PB1 spans 863–945 (TVTIKASYKD…KIVRLLVHDV (83 aa)).

Interacts with NRG2. In terms of tissue distribution, expressed in roots, stems, leaves, flowers and siliques. Detected in root hairs, emerging secondary roots, vascular tissues, leaf parenchyma cells and stomata.

It localises to the nucleus. Transcription factor involved in regulation of nitrate assimilation and in transduction of the nitrate signal. This is Protein NLP7 (NLP7) from Arabidopsis thaliana (Mouse-ear cress).